Here is a 560-residue protein sequence, read N- to C-terminus: Dihydroxy-acid dehydratase (560 aa).

Residues 1–20 (MGDNLKKRSSMTTDGDNRAP) are disordered. Residue Cys-52 participates in [2Fe-2S] cluster binding. Asp-84 provides a ligand contact to Mg(2+). Cys-125 is a binding site for [2Fe-2S] cluster. Mg(2+) is bound by residues Asp-126 and Lys-127. The residue at position 127 (Lys-127) is an N6-carboxylysine. Position 197 (Cys-197) interacts with [2Fe-2S] cluster. Glu-448 is a binding site for Mg(2+). Catalysis depends on Ser-474, which acts as the Proton acceptor.

The protein belongs to the IlvD/Edd family. In terms of assembly, homodimer. It depends on [2Fe-2S] cluster as a cofactor. The cofactor is Mg(2+).

The catalysed reaction is (2R)-2,3-dihydroxy-3-methylbutanoate = 3-methyl-2-oxobutanoate + H2O. It catalyses the reaction (2R,3R)-2,3-dihydroxy-3-methylpentanoate = (S)-3-methyl-2-oxopentanoate + H2O. The protein operates within amino-acid biosynthesis; L-isoleucine biosynthesis; L-isoleucine from 2-oxobutanoate: step 3/4. It participates in amino-acid biosynthesis; L-valine biosynthesis; L-valine from pyruvate: step 3/4. Functionally, functions in the biosynthesis of branched-chain amino acids. Catalyzes the dehydration of (2R,3R)-2,3-dihydroxy-3-methylpentanoate (2,3-dihydroxy-3-methylvalerate) into 2-oxo-3-methylpentanoate (2-oxo-3-methylvalerate) and of (2R)-2,3-dihydroxy-3-methylbutanoate (2,3-dihydroxyisovalerate) into 2-oxo-3-methylbutanoate (2-oxoisovalerate), the penultimate precursor to L-isoleucine and L-valine, respectively. This chain is Dihydroxy-acid dehydratase, found in Leptospira interrogans serogroup Icterohaemorrhagiae serovar Lai (strain 56601).